We begin with the raw amino-acid sequence, 685 residues long: Hemocyanin subunit X (685 aa).

The first 20 residues, 1–20 (MKYCTESLILILAVIGCISA), serve as a signal peptide directing secretion. Residues H210, H214, and H243 each coordinate Cu cation. N329 carries N-linked (GlcNAc...) asparagine glycosylation. Positions 367, 371, and 407 each coordinate Cu cation. C577 and C625 are disulfide-bonded.

This sequence belongs to the tyrosinase family. Hemocyanin subfamily.

The protein resides in the secreted. Its subcellular location is the extracellular space. Hemocyanins are copper-containing oxygen carriers occurring freely dissolved in the hemolymph of many mollusks and arthropods. The chain is Hemocyanin subunit X (HCX) from Scutigera coleoptrata (House centipede).